The sequence spans 368 residues: Phosphoribosylformylglycinamidine cyclo-ligase (368 aa).

This sequence belongs to the AIR synthase family.

Its subcellular location is the cytoplasm. The catalysed reaction is 2-formamido-N(1)-(5-O-phospho-beta-D-ribosyl)acetamidine + ATP = 5-amino-1-(5-phospho-beta-D-ribosyl)imidazole + ADP + phosphate + H(+). It participates in purine metabolism; IMP biosynthesis via de novo pathway; 5-amino-1-(5-phospho-D-ribosyl)imidazole from N(2)-formyl-N(1)-(5-phospho-D-ribosyl)glycinamide: step 2/2. This is Phosphoribosylformylglycinamidine cyclo-ligase from Novosphingobium aromaticivorans (strain ATCC 700278 / DSM 12444 / CCUG 56034 / CIP 105152 / NBRC 16084 / F199).